Reading from the N-terminus, the 461-residue chain is Bacterial E1-like protein BilD (461 aa).

The active-site Glycyl thioester intermediate is Cys-385.

Component of the Bil (bacterial ISG15-like) antiviral defense system, composed of BilA, BilB, BilC and BilD. The Bil system specifically conjugates a ubiquitin-like moiety (bilA) to the bacteriophage central tail fiber (CTF, or tip attachment protein J) via reactions involving E1 (bilD) and E2 (bilB). Modifies CTF of phage SECphi27 and SECphi4, which probably interferes with assembly of the phage tail. Also modifies T5 baseplate hub protein pb3 (gene D16), but not gp27 of phage T6 (Bil defends against T6). BilD (E1) catalyzes the first step in conjugation. Activates ubiquitin-like BilA by first adenylating its C-terminal glycine residue with ATP, and then conjugates it to the side chain of a cysteine residue in E1 (this protein), yielding a ubiquitin-E1 thioester and free AMP. Bil-encoding bacteria produce mostly defective phage SECphi27, many of which have phage assembly defects, including no tails. SECphi27 phage progeny produced in E.coli with the Bil system inject less DNA into naive host cells, maybe because the phage are less able to adsorb and inject their DNA into host cells. Functionally, expression of the Bil system in E.coli (strain MG1655) confers about 100-fold resistance to phage SECphi27, SECphi18, SECphi6, SECphi4 and T5, but not to SECphi17. When cells expressing the Bil system are infected by phage SECphi27 at low multiplicity of infection (0.03 MOI) the culture survives, at 3.0 MOI the culture collapses at the same time as cells without the Bil system. The sequence is that of Bacterial E1-like protein BilD from Collimonas sp. (strain OK412).